Consider the following 442-residue polypeptide: Trigger factor (442 aa).

The PPIase FKBP-type domain occupies 163 to 248; it reads YDRVTINYCI…IIKIEKKQEL (86 aa).

The protein belongs to the FKBP-type PPIase family. Tig subfamily.

It is found in the cytoplasm. It carries out the reaction [protein]-peptidylproline (omega=180) = [protein]-peptidylproline (omega=0). Involved in protein export. Acts as a chaperone by maintaining the newly synthesized protein in an open conformation. Functions as a peptidyl-prolyl cis-trans isomerase. The chain is Trigger factor from Buchnera aphidicola subsp. Acyrthosiphon pisum (strain 5A).